We begin with the raw amino-acid sequence, 348 residues long: MAAVPDRERALDLALAQIDKQFGKGSVMRLGERPVVQTAVVPTGSIALDVALGVGGLPRGRVIEVYGPESSGKTTVALHAVANAQRAGGIAAFVDAEHALDPEYARALGVDTDALLVSQPDTGEQALEIADMLVRSGALDIIIIDSVAALVPRAEIEGEMGDSHVGLQARLMSQALRKMTGVLSNTGTTAIFINQLREKIGVMFGSPETTTGGRALKFYASVRLDVRRIESLKDGTDVVGNRTRVKVVKNKVAAPFKQAEFDIMYGKGISREGSLIDVGVEQAIIRKSGAWYTYEGDQLGQGKEKAREFLRENPDVAAEIEKKILEKLGVGAGAGDATGGPELPPVDF.

67 to 74 contributes to the ATP binding site; it reads GPESSGKT.

The protein belongs to the RecA family.

It is found in the cytoplasm. Its function is as follows. Can catalyze the hydrolysis of ATP in the presence of single-stranded DNA, the ATP-dependent uptake of single-stranded DNA by duplex DNA, and the ATP-dependent hybridization of homologous single-stranded DNAs. It interacts with LexA causing its activation and leading to its autocatalytic cleavage. The chain is Protein RecA from Salinispora arenicola (strain CNS-205).